The primary structure comprises 294 residues: Cell division control protein 2 homolog A (294 aa).

Residues 4–287 form the Protein kinase domain; the sequence is YEKVEKIGEG…ARNALQHEYF (284 aa). Residues 10–18 and lysine 33 each bind ATP; that span reads IGEGTYGVV. Threonine 14 carries the phosphothreonine modification. Tyrosine 15 carries the post-translational modification Phosphotyrosine. The active-site Proton acceptor is aspartate 127. Residue threonine 161 is modified to Phosphothreonine; by CAK.

The protein belongs to the protein kinase superfamily. CMGC Ser/Thr protein kinase family. CDC2/CDKX subfamily.

The enzyme catalyses L-seryl-[protein] + ATP = O-phospho-L-seryl-[protein] + ADP + H(+). It carries out the reaction L-threonyl-[protein] + ATP = O-phospho-L-threonyl-[protein] + ADP + H(+). It catalyses the reaction [DNA-directed RNA polymerase] + ATP = phospho-[DNA-directed RNA polymerase] + ADP + H(+). Phosphorylation at Thr-14 or Tyr-15 inactivates the enzyme, while phosphorylation at Thr-161 activates it. In terms of biological role, plays a key role in the control of the eukaryotic cell cycle. The protein is Cell division control protein 2 homolog A (CDC2A) of Antirrhinum majus (Garden snapdragon).